We begin with the raw amino-acid sequence, 1103 residues long: Retinal guanylyl cyclase 2 (1103 aa).

Positions 1–46 are cleaved as a signal peptide; sequence MFLAPWPFSHLMLWFVTLGRQRGQHGLASFKLLWCLWLLVLMSLPL. The Extracellular segment spans residues 47 to 465; it reads QVWAPPYKIG…DGRICQGGIN (419 aa). A disulfide bridge connects residues cysteine 104 and cysteine 132. Residues 466–490 traverse the membrane as a helical segment; it reads PTFALMVCLALLIALLSINGFAYFI. The Cytoplasmic portion of the chain corresponds to 491–1103; it reads RHRINKIQLI…FQRRKQKSSW (613 aa). A Protein kinase domain is found at 532–812; the sequence is FQITSEVQSG…DEIFNQFKTF (281 aa). The Guanylate cyclase domain maps to 884–1014; the sequence is TLYFSDIVGF…DTVNTASRME (131 aa).

Belongs to the adenylyl cyclase class-4/guanylyl cyclase family. Homodimer. Interacts with RD3; promotes the exit of GUCY2F from the endoplasmic reticulum and its trafficking to the photoreceptor outer segments. In terms of processing, there are 9 conserved cysteine residues in sensory guanylate cyclases, 6 in the extracellular domain, which may be involved in intra- or interchain disulfide bonds. Expressed specifically in retina.

The protein localises to the membrane. The protein resides in the photoreceptor outer segment membrane. The catalysed reaction is GTP = 3',5'-cyclic GMP + diphosphate. Activated by GUCA1B when free calcium ions concentration is low, and inhibited by GUCA1B when free calcium ions concentration is high. Inhibited by RD3. Its function is as follows. Responsible for the synthesis of cyclic GMP (cGMP) in rods and cones of photoreceptors. Plays an essential role in phototransduction, by mediating cGMP replenishment. May also participate in the trafficking of membrane-asociated proteins to the photoreceptor outer segment membrane. The protein is Retinal guanylyl cyclase 2 (GUCY2F) of Bos taurus (Bovine).